We begin with the raw amino-acid sequence, 395 residues long: Isoafricanol synthase (395 aa).

Asp-95, Asn-246, Ser-250, and Glu-254 together coordinate Mg(2+). Over residues 346–357 (TEAVSGGRERPW) the composition is skewed to basic and acidic residues. A disordered region spans residues 346–395 (TEAVSGGRERPWARLTGAEDLIRAGRGAPPPPGSGPDTRQPMPSEPSQLA).

The protein belongs to the terpene synthase family. It depends on Mg(2+) as a cofactor.

The enzyme catalyses (2E,6E)-farnesyl diphosphate + H2O = (+)-isoafricanol + diphosphate. Functionally, catalyzes the cyclization of farnesyl diphosphate (FPP) to isoafricanol. The polypeptide is Isoafricanol synthase (Streptomyces malaysiensis).